The primary structure comprises 124 residues: Aspartate 1-decarboxylase (124 aa).

Ser21 (schiff-base intermediate with substrate; via pyruvic acid) is an active-site residue. A Pyruvic acid (Ser) modification is found at Ser21. Thr53 contacts substrate. Tyr54 serves as the catalytic Proton donor. Position 69–71 (69–71) interacts with substrate; sequence GAA.

This sequence belongs to the PanD family. As to quaternary structure, heterooctamer of four alpha and four beta subunits. Requires pyruvate as cofactor. Is synthesized initially as an inactive proenzyme, which is activated by self-cleavage at a specific serine bond to produce a beta-subunit with a hydroxyl group at its C-terminus and an alpha-subunit with a pyruvoyl group at its N-terminus.

It localises to the cytoplasm. It catalyses the reaction L-aspartate + H(+) = beta-alanine + CO2. The protein operates within cofactor biosynthesis; (R)-pantothenate biosynthesis; beta-alanine from L-aspartate: step 1/1. Its function is as follows. Catalyzes the pyruvoyl-dependent decarboxylation of aspartate to produce beta-alanine. The polypeptide is Aspartate 1-decarboxylase (Dehalococcoides mccartyi (strain CBDB1)).